We begin with the raw amino-acid sequence, 419 residues long: eIF5-mimic protein 1 (419 aa).

The interval 1–22 is disordered; that stretch reads MNKHQKPVLTGQRFKTRKRDEK. Residue K117 is modified to N6-acetyllysine. The W2 domain maps to 248–415; it reads VQQSLGTRKE…QNAEEESESE (168 aa). 3 positions are modified to phosphoserine: S412, S414, and S419.

This sequence belongs to the BZW family. Interacts with EIF3E, EIF2S2 and EIF3C.

The protein localises to the cytoplasm. In terms of biological role, translation initiation regulator which represses non-AUG initiated translation and repeat-associated non-AUG (RAN) initiated translation by acting as a competitive inhibitor of eukaryotic translation initiation factor 5 (EIF5) function. Increases the accuracy of translation initiation by impeding EIF5-dependent translation from non-AUG codons by competing with it for interaction with EIF2S2 within the 43S pre-initiation complex (PIC) in an EIF3C-binding dependent manner. This chain is eIF5-mimic protein 1 (Bzw2), found in Mus musculus (Mouse).